A 100-amino-acid chain; its full sequence is Cytochrome b (100 aa).

The next 3 helical transmembrane spans lie at 1–21 (MGSL…FLAM), 45–66 (WLIR…YLHI), and 81–100 (WNIG…VGYV). His-51 and His-65 together coordinate heme b.

The protein belongs to the cytochrome b family. In terms of assembly, the cytochrome bc1 complex contains 3 respiratory subunits (MT-CYB, CYC1 and UQCRFS1), 2 core proteins (UQCRC1 and UQCRC2) and probably 6 low-molecular weight proteins. The cofactor is heme b.

The protein resides in the mitochondrion inner membrane. In terms of biological role, component of the ubiquinol-cytochrome c reductase complex (complex III or cytochrome b-c1 complex) that is part of the mitochondrial respiratory chain. The b-c1 complex mediates electron transfer from ubiquinol to cytochrome c. Contributes to the generation of a proton gradient across the mitochondrial membrane that is then used for ATP synthesis. The chain is Cytochrome b (mt-cyb) from Polypterus sp. (Bichir).